Here is a 349-residue protein sequence, read N- to C-terminus: UDP-3-O-acylglucosamine N-acyltransferase (349 aa).

His246 (proton acceptor) is an active-site residue.

This sequence belongs to the transferase hexapeptide repeat family. LpxD subfamily. As to quaternary structure, homotrimer.

The enzyme catalyses a UDP-3-O-[(3R)-3-hydroxyacyl]-alpha-D-glucosamine + a (3R)-hydroxyacyl-[ACP] = a UDP-2-N,3-O-bis[(3R)-3-hydroxyacyl]-alpha-D-glucosamine + holo-[ACP] + H(+). It participates in bacterial outer membrane biogenesis; LPS lipid A biosynthesis. Its function is as follows. Catalyzes the N-acylation of UDP-3-O-acylglucosamine using 3-hydroxyacyl-ACP as the acyl donor. Is involved in the biosynthesis of lipid A, a phosphorylated glycolipid that anchors the lipopolysaccharide to the outer membrane of the cell. The chain is UDP-3-O-acylglucosamine N-acyltransferase from Protochlamydia amoebophila (strain UWE25).